The sequence spans 284 residues: 4-diphosphocytidyl-2-C-methyl-D-erythritol kinase (284 aa).

Lys-14 is an active-site residue. An ATP-binding site is contributed by 98 to 108 (PMGGGLGGGSS). Asp-140 is a catalytic residue.

It belongs to the GHMP kinase family. IspE subfamily.

The catalysed reaction is 4-CDP-2-C-methyl-D-erythritol + ATP = 4-CDP-2-C-methyl-D-erythritol 2-phosphate + ADP + H(+). The protein operates within isoprenoid biosynthesis; isopentenyl diphosphate biosynthesis via DXP pathway; isopentenyl diphosphate from 1-deoxy-D-xylulose 5-phosphate: step 3/6. In terms of biological role, catalyzes the phosphorylation of the position 2 hydroxy group of 4-diphosphocytidyl-2C-methyl-D-erythritol. The chain is 4-diphosphocytidyl-2-C-methyl-D-erythritol kinase from Shewanella baltica (strain OS195).